Consider the following 186-residue polypeptide: dCTP deaminase (186 aa).

A dCTP-binding site is contributed by 107–112; sequence KSTYAR. Glu-133 acts as the Proton donor/acceptor in catalysis. 3 residues coordinate dCTP: Gln-152, Tyr-166, and Gln-176.

The protein belongs to the dCTP deaminase family. Homotrimer.

The catalysed reaction is dCTP + H2O + H(+) = dUTP + NH4(+). The protein operates within pyrimidine metabolism; dUMP biosynthesis; dUMP from dCTP (dUTP route): step 1/2. In terms of biological role, catalyzes the deamination of dCTP to dUTP. The polypeptide is dCTP deaminase (Campylobacter jejuni subsp. doylei (strain ATCC BAA-1458 / RM4099 / 269.97)).